The chain runs to 457 residues: Mesentericin Y105 secretion protein MesE (457 aa).

A helical membrane pass occupies residues threonine 22 to alanine 42.

The protein belongs to the membrane fusion protein (MFP) (TC 8.A.1) family.

Its subcellular location is the membrane. Functionally, involved in the secretion of mesentericin Y105. The sequence is that of Mesentericin Y105 secretion protein MesE (mesE) from Leuconostoc mesenteroides.